We begin with the raw amino-acid sequence, 472 residues long: Lactate utilization protein B (472 aa).

4Fe-4S ferredoxin-type domains are found at residues 304-334 and 353-382; these read GTEF…GHSY and YDDY…LHEL. Cysteine 313, cysteine 316, cysteine 319, cysteine 323, cysteine 366, cysteine 369, and cysteine 373 together coordinate [4Fe-4S] cluster.

This sequence belongs to the LutB/YkgF family.

Is involved in L-lactate degradation and allows cells to grow with lactate as the sole carbon source. Has probably a role as an electron transporter during oxidation of L-lactate. The sequence is that of Lactate utilization protein B from Anoxybacillus flavithermus (strain DSM 21510 / WK1).